Here is a 419-residue protein sequence, read N- to C-terminus: Methionine aminopeptidase 2 (419 aa).

The segment at 1 to 69 is disordered; sequence MSTNSSNPNE…KITAIDNSYP (69 aa). Positions 11-29 are enriched in basic and acidic residues; it reads VMEKVQDLKIDDSKPKVDS. The span at 30–41 shows a compositional bias: acidic residues; sequence EEQPEAESDGES. Positions 48–61 are enriched in basic residues; sequence KKKKKKKSKKKKKI. His-172 is a substrate binding site. A divalent metal cation contacts are provided by Asp-192, Asp-203, and His-272. His-280 is a substrate binding site. Positions 305 and 400 each coordinate a divalent metal cation.

Belongs to the peptidase M24A family. Methionine aminopeptidase eukaryotic type 2 subfamily. Co(2+) serves as cofactor. Requires Zn(2+) as cofactor. The cofactor is Mn(2+). Fe(2+) is required as a cofactor.

It localises to the cytoplasm. It carries out the reaction Release of N-terminal amino acids, preferentially methionine, from peptides and arylamides.. Its function is as follows. Cotranslationally removes the N-terminal methionine from nascent proteins. The N-terminal methionine is often cleaved when the second residue in the primary sequence is small and uncharged (Met-Ala-, Cys, Gly, Pro, Ser, Thr, or Val). In Debaryomyces hansenii (strain ATCC 36239 / CBS 767 / BCRC 21394 / JCM 1990 / NBRC 0083 / IGC 2968) (Yeast), this protein is Methionine aminopeptidase 2.